A 335-amino-acid polypeptide reads, in one-letter code: MKSIFILVLGNTEVSLIPGISVAGATPELTKLTPPADAEYLFYEKPRIIDAIPVTPEGHPTPAIITKAARELANFPILVVRGGTYLAPLVPHVHISSAVGRDFRREPALPEFGEIVRMAKLLGEELNRTEIEELVIGESTPGGTTTAQAVLWAMGYDARTSSASPENPQSLKEQVIAEGFQRAGIERGQLKDNPLEALRQFGDPMMATVVGLALGFRKNVVLAGGTQMLAVSALLKALEEDMSRFMIATTKWVVRDKSATFIETAKEIGIITYAADLDFSKSEFKGLRDYENGYVKEGVGAGGATWLAIKAGFSPEEVSAKVEELYRRLMGMKSP.

It belongs to the UPF0284 family.

This is UPF0284 protein TK0853 from Thermococcus kodakarensis (strain ATCC BAA-918 / JCM 12380 / KOD1) (Pyrococcus kodakaraensis (strain KOD1)).